We begin with the raw amino-acid sequence, 87 residues long: Small ribosomal subunit protein uS17 (87 aa).

It belongs to the universal ribosomal protein uS17 family. As to quaternary structure, part of the 30S ribosomal subunit.

Its function is as follows. One of the primary rRNA binding proteins, it binds specifically to the 5'-end of 16S ribosomal RNA. This is Small ribosomal subunit protein uS17 from Exiguobacterium sibiricum (strain DSM 17290 / CCUG 55495 / CIP 109462 / JCM 13490 / 255-15).